A 430-amino-acid polypeptide reads, in one-letter code: Adenylosuccinate synthetase (430 aa).

GTP is bound by residues 12–18 (GDEGKGK) and 40–42 (GHT). Residue Asp13 is the Proton acceptor of the active site. The Mg(2+) site is built by Asp13 and Gly40. IMP is bound by residues 13-16 (DEGK), 38-41 (NAGH), Thr128, Arg142, Gln223, Thr238, and Arg302. His41 (proton donor) is an active-site residue. Position 298-304 (298-304 (TVTKRPR)) interacts with substrate. GTP-binding positions include Arg304, 330–332 (CVD), and 412–414 (SVG).

This sequence belongs to the adenylosuccinate synthetase family. Homodimer. Requires Mg(2+) as cofactor.

Its subcellular location is the cytoplasm. It catalyses the reaction IMP + L-aspartate + GTP = N(6)-(1,2-dicarboxyethyl)-AMP + GDP + phosphate + 2 H(+). The protein operates within purine metabolism; AMP biosynthesis via de novo pathway; AMP from IMP: step 1/2. Functionally, plays an important role in the de novo pathway of purine nucleotide biosynthesis. Catalyzes the first committed step in the biosynthesis of AMP from IMP. This is Adenylosuccinate synthetase from Ligilactobacillus salivarius (strain UCC118) (Lactobacillus salivarius).